The following is a 338-amino-acid chain: 1-aminocyclopropane-1-carboxylate deaminase (338 aa).

Lysine 51 carries the post-translational modification N6-(pyridoxal phosphate)lysine. Serine 78 serves as the catalytic Nucleophile.

It belongs to the ACC deaminase/D-cysteine desulfhydrase family. As to quaternary structure, homotrimer. Pyridoxal 5'-phosphate serves as cofactor.

It carries out the reaction 1-aminocyclopropane-1-carboxylate + H2O = 2-oxobutanoate + NH4(+). Functionally, catalyzes a cyclopropane ring-opening reaction, the irreversible conversion of 1-aminocyclopropane-1-carboxylate (ACC) to ammonia and alpha-ketobutyrate. Allows growth on ACC as a nitrogen source. The protein is 1-aminocyclopropane-1-carboxylate deaminase of Burkholderia cenocepacia (strain ATCC BAA-245 / DSM 16553 / LMG 16656 / NCTC 13227 / J2315 / CF5610) (Burkholderia cepacia (strain J2315)).